We begin with the raw amino-acid sequence, 496 residues long: Protein nucleotidyltransferase YdiU (496 aa).

Residues Gly-98, Gly-100, Arg-101, Lys-116, Asp-128, Gly-129, Arg-179, and Arg-186 each contribute to the ATP site. Asp-259 functions as the Proton acceptor in the catalytic mechanism. Asn-260 and Asp-269 together coordinate Mg(2+). ATP is bound at residue Asp-269.

It belongs to the SELO family. Mg(2+) is required as a cofactor. The cofactor is Mn(2+).

It catalyses the reaction L-seryl-[protein] + ATP = 3-O-(5'-adenylyl)-L-seryl-[protein] + diphosphate. The catalysed reaction is L-threonyl-[protein] + ATP = 3-O-(5'-adenylyl)-L-threonyl-[protein] + diphosphate. The enzyme catalyses L-tyrosyl-[protein] + ATP = O-(5'-adenylyl)-L-tyrosyl-[protein] + diphosphate. It carries out the reaction L-histidyl-[protein] + UTP = N(tele)-(5'-uridylyl)-L-histidyl-[protein] + diphosphate. It catalyses the reaction L-seryl-[protein] + UTP = O-(5'-uridylyl)-L-seryl-[protein] + diphosphate. The catalysed reaction is L-tyrosyl-[protein] + UTP = O-(5'-uridylyl)-L-tyrosyl-[protein] + diphosphate. Its function is as follows. Nucleotidyltransferase involved in the post-translational modification of proteins. It can catalyze the addition of adenosine monophosphate (AMP) or uridine monophosphate (UMP) to a protein, resulting in modifications known as AMPylation and UMPylation. This chain is Protein nucleotidyltransferase YdiU, found in Albidiferax ferrireducens (strain ATCC BAA-621 / DSM 15236 / T118) (Rhodoferax ferrireducens).